We begin with the raw amino-acid sequence, 864 residues long: Microtubule-associated protein TORTIFOLIA1 (864 aa).

The tract at residues 1 to 26 is disordered; sequence MSTPTTSGSAAKPTRPARSSSLATRS. Polar residues predominate over residues 17–26; sequence ARSSSLATRS. 5 HEAT repeats span residues 76–113, 117–154, 167–204, 208–245, and 248–285; these read ETLP…LHCD, AHLT…IYLK, LAVG…SAAS, TSFQ…VGAI, and QSLE…HSSG. The tract at residues 329–353 is disordered; it reads DGASDDSKLSASEQLGSEKNGEKRS. Ser414 carries the post-translational modification Phosphoserine. Positions 426–504 are disordered; it reads NDEEESGLDD…QSEGSFTSNR (79 aa). Positions 439-448 are enriched in polar residues; that stretch reads MGSSNRLKNT. Residues 449-459 show a composition bias toward basic and acidic residues; the sequence is QADDKQVKGRF. Residues 489-504 show a composition bias toward polar residues; it reads VSNTDNQSEGSFTSNR. A coiled-coil region spans residues 508–561; that stretch reads SAIQRQLLQLERQQTNLMNMLQEFIGGSHDSMVTLEGRVRGLERIVEDMARDLS. Residues 615 to 670 form a disordered region; that stretch reads DDWFIPPHAASRNGQAGPRRSPRSEQYENEHMGNGRRGWDNKASGTIRFGEGPSAR. Residues 636 to 654 are compositionally biased toward basic and acidic residues; it reads PRSEQYENEHMGNGRRGWD.

Interacts with WAV3. As to expression, expressed in roots, hypocotyls, stems, flowers, siliques, inflorescences, petioles, cotyledons, and leaves. Particularly present in root tips and shoot meristems.

It localises to the cytoplasm. The protein localises to the cytoskeleton. Its function is as follows. Plant-specific microtubule-associated protein (MAP) that regulates the orientation of cortical microtubules and the direction of organ growth. Determines microtubule organization by modulating microtubule severing. The polypeptide is Microtubule-associated protein TORTIFOLIA1 (Arabidopsis thaliana (Mouse-ear cress)).